The following is a 405-amino-acid chain: Nicotinate phosphoribosyltransferase (405 aa).

Residue H230 is modified to Phosphohistidine; by autocatalysis.

The protein belongs to the NAPRTase family. Transiently phosphorylated on a His residue during the reaction cycle. Phosphorylation strongly increases the affinity for substrates and increases the rate of nicotinate D-ribonucleotide production. Dephosphorylation regenerates the low-affinity form of the enzyme, leading to product release.

It catalyses the reaction nicotinate + 5-phospho-alpha-D-ribose 1-diphosphate + ATP + H2O = nicotinate beta-D-ribonucleotide + ADP + phosphate + diphosphate. It functions in the pathway cofactor biosynthesis; NAD(+) biosynthesis; nicotinate D-ribonucleotide from nicotinate: step 1/1. Its function is as follows. Catalyzes the synthesis of beta-nicotinate D-ribonucleotide from nicotinate and 5-phospho-D-ribose 1-phosphate at the expense of ATP. This is Nicotinate phosphoribosyltransferase from Bordetella bronchiseptica (strain ATCC BAA-588 / NCTC 13252 / RB50) (Alcaligenes bronchisepticus).